Consider the following 37-residue polypeptide: uncharacterized protein (37 aa).

This sequence belongs to the poxviridae A56.5 protein family.

This is an uncharacterized protein from Vaccinia virus (strain Western Reserve) (VACV).